The primary structure comprises 224 residues: Octanoyltransferase (224 aa).

Residues Pro-29 to Pro-224 form the BPL/LPL catalytic domain. Substrate-binding positions include Arg-68–His-75, Ala-157–Gly-159, and Gly-170–Ala-172. Cys-188 (acyl-thioester intermediate) is an active-site residue.

Belongs to the LipB family.

The protein localises to the cytoplasm. It carries out the reaction octanoyl-[ACP] + L-lysyl-[protein] = N(6)-octanoyl-L-lysyl-[protein] + holo-[ACP] + H(+). It participates in protein modification; protein lipoylation via endogenous pathway; protein N(6)-(lipoyl)lysine from octanoyl-[acyl-carrier-protein]: step 1/2. Functionally, catalyzes the transfer of endogenously produced octanoic acid from octanoyl-acyl-carrier-protein onto the lipoyl domains of lipoate-dependent enzymes. Lipoyl-ACP can also act as a substrate although octanoyl-ACP is likely to be the physiological substrate. The sequence is that of Octanoyltransferase from Methylibium petroleiphilum (strain ATCC BAA-1232 / LMG 22953 / PM1).